Here is a 188-residue protein sequence, read N- to C-terminus: Elongation factor P (188 aa).

It belongs to the elongation factor P family.

Its subcellular location is the cytoplasm. The protein operates within protein biosynthesis; polypeptide chain elongation. In terms of biological role, involved in peptide bond synthesis. Stimulates efficient translation and peptide-bond synthesis on native or reconstituted 70S ribosomes in vitro. Probably functions indirectly by altering the affinity of the ribosome for aminoacyl-tRNA, thus increasing their reactivity as acceptors for peptidyl transferase. The protein is Elongation factor P of Pseudomonas aeruginosa (strain LESB58).